The following is a 480-amino-acid chain: Protein nucleotidyltransferase YdiU (480 aa).

ATP-binding residues include G86, G88, R89, K109, D121, G122, R172, and R179. D248 (proton acceptor) is an active-site residue. Residues N249 and D258 each coordinate Mg(2+). ATP is bound at residue D258.

This sequence belongs to the SELO family. Requires Mg(2+) as cofactor. The cofactor is Mn(2+).

It carries out the reaction L-seryl-[protein] + ATP = 3-O-(5'-adenylyl)-L-seryl-[protein] + diphosphate. The catalysed reaction is L-threonyl-[protein] + ATP = 3-O-(5'-adenylyl)-L-threonyl-[protein] + diphosphate. The enzyme catalyses L-tyrosyl-[protein] + ATP = O-(5'-adenylyl)-L-tyrosyl-[protein] + diphosphate. It catalyses the reaction L-histidyl-[protein] + UTP = N(tele)-(5'-uridylyl)-L-histidyl-[protein] + diphosphate. It carries out the reaction L-seryl-[protein] + UTP = O-(5'-uridylyl)-L-seryl-[protein] + diphosphate. The catalysed reaction is L-tyrosyl-[protein] + UTP = O-(5'-uridylyl)-L-tyrosyl-[protein] + diphosphate. Functionally, nucleotidyltransferase involved in the post-translational modification of proteins. It can catalyze the addition of adenosine monophosphate (AMP) or uridine monophosphate (UMP) to a protein, resulting in modifications known as AMPylation and UMPylation. This is Protein nucleotidyltransferase YdiU from Salmonella newport (strain SL254).